The primary structure comprises 140 residues: Nucleoside diphosphate kinase (140 aa).

ATP is bound by residues lysine 11, phenylalanine 59, arginine 87, threonine 93, arginine 104, and asparagine 114. Histidine 117 acts as the Pros-phosphohistidine intermediate in catalysis.

It belongs to the NDK family. As to quaternary structure, homotetramer. Mg(2+) serves as cofactor.

Its subcellular location is the cytoplasm. The enzyme catalyses a 2'-deoxyribonucleoside 5'-diphosphate + ATP = a 2'-deoxyribonucleoside 5'-triphosphate + ADP. It carries out the reaction a ribonucleoside 5'-diphosphate + ATP = a ribonucleoside 5'-triphosphate + ADP. In terms of biological role, major role in the synthesis of nucleoside triphosphates other than ATP. The ATP gamma phosphate is transferred to the NDP beta phosphate via a ping-pong mechanism, using a phosphorylated active-site intermediate. The protein is Nucleoside diphosphate kinase of Rhizobium rhizogenes (strain K84 / ATCC BAA-868) (Agrobacterium radiobacter).